The sequence spans 689 residues: FAST kinase domain-containing protein 2, mitochondrial (689 aa).

Serine 113 and serine 126 each carry phosphoserine. The region spanning 617 to 674 is the RAP domain; sequence VAVLCVPKSVYCLNSCHPRGLMAMKIRHLNVMGFHVILIHNWELKKLKMEDAVTFVRK.

Belongs to the FAST kinase family. In terms of assembly, monomer. Found in a complex with GRSF1, DDX28, DHX30 and FASTKD5. Associates with the 16S mitochondrial rRNA (16S mt-rRNA). Forms a regulatory protein-RNA complex, consisting of RCC1L, NGRN, RPUSD3, RPUSD4, TRUB2, FASTKD2 and 16S mt-rRNA. As to expression, ubiquitously expressed. Expression detected in spleen, testis, colon, heart, smooth muscle, kidney, brain, lung, liver, brown and white adipose tissue with highest expression in testis, heart and smooth muscle.

The protein localises to the mitochondrion matrix. It is found in the mitochondrion nucleoid. In terms of biological role, plays an important role in assembly of the mitochondrial large ribosomal subunit. As a component of a functional protein-RNA module, consisting of RCC1L, NGRN, RPUSD3, RPUSD4, TRUB2, FASTKD2 and 16S mitochondrial ribosomal RNA (16S mt-rRNA), controls 16S mt-rRNA abundance and is required for intra-mitochondrial translation. May play a role in mitochondrial apoptosis. The chain is FAST kinase domain-containing protein 2, mitochondrial (Fastkd2) from Mus musculus (Mouse).